Consider the following 465-residue polypeptide: Uronate isomerase (465 aa).

The protein belongs to the metallo-dependent hydrolases superfamily. Uronate isomerase family.

The enzyme catalyses D-glucuronate = D-fructuronate. It carries out the reaction aldehydo-D-galacturonate = keto-D-tagaturonate. It participates in carbohydrate metabolism; pentose and glucuronate interconversion. The polypeptide is Uronate isomerase (Bacillus velezensis (strain DSM 23117 / BGSC 10A6 / LMG 26770 / FZB42) (Bacillus amyloliquefaciens subsp. plantarum)).